The primary structure comprises 567 residues: UPF0313 protein CTN_0332 (567 aa).

The region spanning 288–560 (KAIETVKFSI…NKMKENVLFK (273 aa)) is the Radical SAM core domain. Cysteine 303, cysteine 307, and cysteine 310 together coordinate [4Fe-4S] cluster.

The protein belongs to the UPF0313 family. [4Fe-4S] cluster is required as a cofactor.

The protein is UPF0313 protein CTN_0332 of Thermotoga neapolitana (strain ATCC 49049 / DSM 4359 / NBRC 107923 / NS-E).